The chain runs to 83 residues: Cell division topological specificity factor (83 aa).

This sequence belongs to the MinE family.

In terms of biological role, prevents the cell division inhibition by proteins MinC and MinD at internal division sites while permitting inhibition at polar sites. This ensures cell division at the proper site by restricting the formation of a division septum at the midpoint of the long axis of the cell. This chain is Cell division topological specificity factor, found in Deinococcus deserti (strain DSM 17065 / CIP 109153 / LMG 22923 / VCD115).